The following is a 434-amino-acid chain: Serine hydroxymethyltransferase (434 aa).

(6S)-5,6,7,8-tetrahydrofolate contacts are provided by residues Leu-131 and 135-137 (GHL). N6-(pyridoxal phosphate)lysine is present on Lys-240.

Belongs to the SHMT family. As to quaternary structure, homodimer. The cofactor is pyridoxal 5'-phosphate.

It localises to the cytoplasm. The enzyme catalyses (6R)-5,10-methylene-5,6,7,8-tetrahydrofolate + glycine + H2O = (6S)-5,6,7,8-tetrahydrofolate + L-serine. Its pathway is one-carbon metabolism; tetrahydrofolate interconversion. It functions in the pathway amino-acid biosynthesis; glycine biosynthesis; glycine from L-serine: step 1/1. Its function is as follows. Catalyzes the reversible interconversion of serine and glycine with tetrahydrofolate (THF) serving as the one-carbon carrier. This reaction serves as the major source of one-carbon groups required for the biosynthesis of purines, thymidylate, methionine, and other important biomolecules. Also exhibits THF-independent aldolase activity toward beta-hydroxyamino acids, producing glycine and aldehydes, via a retro-aldol mechanism. This is Serine hydroxymethyltransferase from Gluconobacter oxydans (strain 621H) (Gluconobacter suboxydans).